The chain runs to 595 residues: P2X purinoceptor 7 (595 aa).

The Cytoplasmic segment spans residues Met-1–Gln-22. A lipid anchor (S-palmitoyl cysteine) is attached at Cys-4. Residues Ser-23–Met-46 traverse the membrane as a helical segment. Topologically, residues Ser-47–Phe-328 are extracellular. Asn-74 is a glycosylation site (N-linked (GlcNAc...) asparagine). Disulfide bonds link Cys-119/Cys-168, Cys-129/Cys-152, and Cys-135/Cys-162. The residue at position 125 (Arg-125) is an ADP-ribosylarginine. N-linked (GlcNAc...) asparagine glycosylation is present at Asn-187. Thr-189 contacts ATP. Residues Asn-202 and Asn-213 are each glycosylated (N-linked (GlcNAc...) asparagine). Cys-216 and Cys-226 are joined by a disulfide. Residue Asn-241 is glycosylated (N-linked (GlcNAc...) asparagine). Cys-260 and Cys-269 are oxidised to a cystine. Asn-284 carries an N-linked (GlcNAc...) asparagine glycan. ATP is bound by residues Arg-294 and Lys-311. The helical transmembrane segment at Asp-329 to Leu-353 threads the bilayer. Ser-342 contacts Na(+). Over Ile-354 to Tyr-595 the chain is Cytoplasmic. The segment at Ser-360–Cys-377 is C-cys anchor. Residues Cys-362, Cys-363, Cys-374, and Cys-377 are each lipidated (S-palmitoyl cysteine). Residues Lys-395–Tyr-595 form a cytoplasmic ballast region. The Zn(2+) site is built by Cys-479, Cys-499, and Cys-506. Residues Arg-546, His-547, Tyr-550, and Ala-567 each contribute to the GTP site. Zn(2+) is bound at residue Cys-572. GTP-binding residues include Lys-583, Ser-589, and Gly-590.

The protein belongs to the P2X receptor family. As to quaternary structure, homotrimer. Interacts with LAMA3, ITGB2, ACTB, ACTN4, SVIL, MPP3, HSPA1, HSPCB, HSPA8, PIK230 and PTPRB. Interacts (via C-terminus) with EMP2. Post-translationally, phosphorylation results in its inactivation. ADP-ribosylation at Arg-125 is necessary and sufficient to activate P2RX7 and gate the channel. In terms of processing, palmitoylation of several cysteines in the C-terminal cytoplasmic tail is required for efficient localization to cell surface. Palmitoylation prevents channel desensitization by physically anchoring the palmitoylated groups to the membrane.

It is found in the cell membrane. The catalysed reaction is Ca(2+)(in) = Ca(2+)(out). It carries out the reaction K(+)(in) = K(+)(out). It catalyses the reaction Na(+)(in) = Na(+)(out). Its activity is regulated as follows. Activated by high extracellular ATP levels (0.1-2.5 mM). The synthetic analog 2'(3')-O-(4-benzoylbenzoyl)ATP (BzATP) acts as a potent agonist. Does not undergo desensitization, instead, undergoes a facilitation process where currents progressively increase with repetitive or prolonged agonist application. Palmitoylation prevents channel desensitization. The permeability of the P2RX7 channel is modulated by the amount of cholesterol in the plasma membrane. In terms of biological role, ATP-gated nonselective transmembrane cation channel that requires high millimolar concentrations of ATP for activation. Upon ATP binding, it rapidly opens to allow the influx of small cations Na(+) and Ca(2+), and the K(+) efflux. Also has the ability to form a large pore in the cell membrane, allowing the passage of large cationic molecules. In microglia, may mediate the transmembrane transport of exogenous NADPH. In immune cells, P2RX7 acts as a molecular sensor in pathological inflammatory states by detecting and responding to high local concentrations of extracellar ATP. In microglial cells, P2RX7 activation leads to the release of pro-inflammatory cytokines, such as IL-1beta and IL-18, through the activation of the NLRP3 inflammasome and caspase-1. Cooperates with KCNK6 to activate NLRP3 inflammasome. Activates death pathways leading to apoptosis and autophagy. Activates death pathways leading to pyroptosis. Its function is as follows. Has a higher affinity for ATP, slower deactivation and an increased propensity to form large cation-permeable pores. In Rattus norvegicus (Rat), this protein is P2X purinoceptor 7 (P2rx7).